Reading from the N-terminus, the 149-residue chain is Large ribosomal subunit protein uL11 (149 aa).

This sequence belongs to the universal ribosomal protein uL11 family. As to quaternary structure, part of the ribosomal stalk of the 50S ribosomal subunit. Interacts with L10 and the large rRNA to form the base of the stalk. L10 forms an elongated spine to which L12 dimers bind in a sequential fashion forming a multimeric L10(L12)X complex. In terms of processing, one or more lysine residues are methylated.

Forms part of the ribosomal stalk which helps the ribosome interact with GTP-bound translation factors. The chain is Large ribosomal subunit protein uL11 from Methylobacterium sp. (strain 4-46).